Here is a 157-residue protein sequence, read N- to C-terminus: Putative glutathione-dependent formaldehyde-activating enzyme (157 aa).

One can recognise a CENP-V/GFA domain in the interval leucine 3–aspartate 134. Cysteine 7, cysteine 9, cysteine 27, cysteine 29, cysteine 32, cysteine 79, and cysteine 82 together coordinate Zn(2+).

Belongs to the Gfa family. Zn(2+) is required as a cofactor.

The enzyme catalyses S-(hydroxymethyl)glutathione = glutathione + formaldehyde. It functions in the pathway one-carbon metabolism; formaldehyde degradation; formate from formaldehyde (glutathione route): step 1/3. In terms of biological role, catalyzes the condensation of formaldehyde and glutathione to S-hydroxymethylglutathione. The chain is Putative glutathione-dependent formaldehyde-activating enzyme from Halomonas elongata (strain ATCC 33173 / DSM 2581 / NBRC 15536 / NCIMB 2198 / 1H9).